The following is a 176-amino-acid chain: Ubiquitin-conjugating enzyme E2-20 kDa (176 aa).

Polar residues predominate over residues 1–20 (MDSDMQNQNPHTNSKNSSSA). The segment at 1-25 (MDSDMQNQNPHTNSKNSSSAGMAVD) is disordered. Residues 28–175 (SVTKRLRSEL…LMQRYKEIDE (148 aa)) enclose the UBC core domain. C113 functions as the Glycyl thioester intermediate in the catalytic mechanism.

It belongs to the ubiquitin-conjugating enzyme family.

It catalyses the reaction S-ubiquitinyl-[E1 ubiquitin-activating enzyme]-L-cysteine + [E2 ubiquitin-conjugating enzyme]-L-cysteine = [E1 ubiquitin-activating enzyme]-L-cysteine + S-ubiquitinyl-[E2 ubiquitin-conjugating enzyme]-L-cysteine.. It participates in protein modification; protein ubiquitination. Functionally, catalyzes the covalent attachment of ubiquitin to other proteins. The protein is Ubiquitin-conjugating enzyme E2-20 kDa (ubc11) of Schizosaccharomyces pombe (strain 972 / ATCC 24843) (Fission yeast).